The chain runs to 230 residues: uncharacterized protein (230 aa).

It to E.coli HemX N-terminal region.

This is an uncharacterized protein from Haemophilus influenzae (strain ATCC 51907 / DSM 11121 / KW20 / Rd).